Here is a 253-residue protein sequence, read N- to C-terminus: MSESSEKTSTTHFGFRQVAAKDKKTLVAEVFTSVSRRYDLMNDLMSLGIHRAWKRYFVATAQVKSGDRVLDLAGGTGDIAMLLKNRVGAEGSIVLGDINASMLSVGRDRLIDRGVVARLDYVQCNAEALPFQDKCFDLVTMSFGLRNVTDKDAALREMFRVLKVGGQARVLEFSAVTAEWFKPIYDFHSFQVLPRLGRLFARDAASYRYLAESIRKHPPQEELQAMMGSAGFERCGYRNLTGGIVAIHSGYKY.

S-adenosyl-L-methionine contacts are provided by residues Thr-76, Asp-97, 125 to 126, and Ser-142; that span reads NA.

It belongs to the class I-like SAM-binding methyltransferase superfamily. MenG/UbiE family.

It carries out the reaction a 2-demethylmenaquinol + S-adenosyl-L-methionine = a menaquinol + S-adenosyl-L-homocysteine + H(+). The enzyme catalyses a 2-methoxy-6-(all-trans-polyprenyl)benzene-1,4-diol + S-adenosyl-L-methionine = a 5-methoxy-2-methyl-3-(all-trans-polyprenyl)benzene-1,4-diol + S-adenosyl-L-homocysteine + H(+). It functions in the pathway quinol/quinone metabolism; menaquinone biosynthesis; menaquinol from 1,4-dihydroxy-2-naphthoate: step 2/2. Its pathway is cofactor biosynthesis; ubiquinone biosynthesis. Functionally, methyltransferase required for the conversion of demethylmenaquinol (DMKH2) to menaquinol (MKH2) and the conversion of 2-polyprenyl-6-methoxy-1,4-benzoquinol (DDMQH2) to 2-polyprenyl-3-methyl-6-methoxy-1,4-benzoquinol (DMQH2). This is Ubiquinone/menaquinone biosynthesis C-methyltransferase UbiE from Xylella fastidiosa (strain M23).